We begin with the raw amino-acid sequence, 50 residues long: PsaJ-like protein asl3190 (50 aa).

A helical transmembrane segment spans residues 21–41; the sequence is VLAVISISVAFSTWAIFNYIF.

The protein belongs to the PsaJ family.

The protein localises to the cellular thylakoid membrane. The polypeptide is PsaJ-like protein asl3190 (Nostoc sp. (strain PCC 7120 / SAG 25.82 / UTEX 2576)).